A 349-amino-acid polypeptide reads, in one-letter code: DNA replication and repair protein RecF (349 aa).

30–37 lines the ATP pocket; it reads GKNGSGKT.

It belongs to the RecF family.

It is found in the cytoplasm. In terms of biological role, the RecF protein is involved in DNA metabolism; it is required for DNA replication and normal SOS inducibility. RecF binds preferentially to single-stranded, linear DNA. It also seems to bind ATP. In Francisella tularensis subsp. novicida (strain U112), this protein is DNA replication and repair protein RecF.